A 581-amino-acid chain; its full sequence is Caprolactamase subunit beta (581 aa).

Residues D41, H99, D102, and H124 each coordinate Zn(2+).

This sequence belongs to the HyuB family. In terms of assembly, the caprolactamase is a heterotetramer composed of two alpha subunits (CapA) and two beta subunits (CapB). Zn(2+) is required as a cofactor.

Its activity is regulated as follows. Activity is dependent on the presence of ATP and bicarbonate. The requirement for bicarbonate may be related to allosteric activation through conformational effects, but it is also conceivable that carboxyphosphate is formed and acts as a mediator in caprolactam activation, forming carboxy- or phospholactim. Its function is as follows. Component of a caprolactamase involved in the degradation of caprolactam, an industrial compound mainly used in the production of Nylon 6. Catalyzes the ATP-dependent hydrolysis of the caprolactam ring to form 6-aminocaproic acid (6-ACA). The beta subunit is responsible for hydrolytic lactam ring opening. The enzyme cannot use 5-oxoproline. The chain is Caprolactamase subunit beta from Pseudomonas jessenii.